The primary structure comprises 230 residues: Thymidylate kinase (230 aa).

20-27 (GGEGAGKS) is an ATP binding site.

The protein belongs to the thymidylate kinase family.

It catalyses the reaction dTMP + ATP = dTDP + ADP. Functionally, phosphorylation of dTMP to form dTDP in both de novo and salvage pathways of dTTP synthesis. The chain is Thymidylate kinase from Rhodopseudomonas palustris (strain BisB18).